A 234-amino-acid chain; its full sequence is Purine nucleoside phosphorylase DeoD-type (234 aa).

A purine D-ribonucleoside is bound at residue His4. Residues Gly20, Arg24, Arg43, and 87–90 each bind phosphate; that span reads RVGT. A purine D-ribonucleoside contacts are provided by residues Glu162, 178-180, and 202-203; these read EME and SD. The active-site Proton donor is Asp203.

It belongs to the PNP/UDP phosphorylase family. In terms of assembly, homohexamer; trimer of homodimers.

It carries out the reaction a purine D-ribonucleoside + phosphate = a purine nucleobase + alpha-D-ribose 1-phosphate. The enzyme catalyses a purine 2'-deoxy-D-ribonucleoside + phosphate = a purine nucleobase + 2-deoxy-alpha-D-ribose 1-phosphate. Catalyzes the reversible phosphorolytic breakdown of the N-glycosidic bond in the beta-(deoxy)ribonucleoside molecules, with the formation of the corresponding free purine bases and pentose-1-phosphate. Its function is as follows. Cleavage of adenosine and its derivatives. The polypeptide is Purine nucleoside phosphorylase DeoD-type (Geobacillus stearothermophilus (Bacillus stearothermophilus)).